Reading from the N-terminus, the 560-residue chain is Transcription termination factor 5, mitochondrial (560 aa).

Residues 1-23 (MLRNGQNQAQLLARSLGQLARGM) constitute a mitochondrion transit peptide. The segment at 23–47 (MASSKRVSSKKEDLKPKLPKPPTVE) is disordered.

The protein belongs to the mTERF family. Probably binds to the mTTF-DNA complex.

The protein localises to the mitochondrion. Binds promoter DNA and regulates initiation of transcription. Regulates mitochondrial replication and transcription. Required for normal topology and maintenance of mitochondrial DNA (mtDNA) levels. Regulates mtDNA replication by re-activating replication after replication pausing. Likely to regulate replication pausing by coordinating with the mitochondrial termination factor mTTF which promotes replication pausing. Their function in replication pausing prevents unregulated replication that may occur for example by collisions between the machineries of DNA replication and transcription during mtDNA synthesis. This ensures the incorporation of RNA transcripts into replication intermediates at the replication fork and allows for proper fork progression. Possibly functions downstream of Dref which activates genes involved in mtDNA replication and maintenance. The protein is Transcription termination factor 5, mitochondrial of Drosophila melanogaster (Fruit fly).